We begin with the raw amino-acid sequence, 131 residues long: Small ribosomal subunit protein uS9 (131 aa).

The protein belongs to the universal ribosomal protein uS9 family.

The polypeptide is Small ribosomal subunit protein uS9 (Actinobacillus pleuropneumoniae serotype 7 (strain AP76)).